The following is a 1181-amino-acid chain: Clustered mitochondria protein homolog (1181 aa).

The tract at residues 165 to 195 (AKAEALAKNEEVSEDEESEPEDDTPMKQSTQ) is disordered. The segment covering 176-187 (VSEDEESEPEDD) has biased composition (acidic residues). In terms of domain architecture, Clu spans 379-622 (DMARNQELLS…RLAPVDIAFL (244 aa)). Positions 1130–1181 (GRLARQAPKPTATHQKEAPKKASKKTKGKGKGKDDKGEKLVAELKKKKAGKR) are disordered. Positions 1150–1159 (KASKKTKGKG) are enriched in basic residues. A compositionally biased stretch (basic and acidic residues) spans 1160–1173 (KGKDDKGEKLVAEL).

Belongs to the CLU family. As to quaternary structure, may associate with the eukaryotic translation initiation factor 3 (eIF-3) complex.

It is found in the cytoplasm. In terms of biological role, mRNA-binding protein involved in proper cytoplasmic distribution of mitochondria. The chain is Clustered mitochondria protein homolog from Yarrowia lipolytica (strain CLIB 122 / E 150) (Yeast).